The sequence spans 598 residues: UvrABC system protein C (598 aa).

Residues Asp14 to Ile91 form the GIY-YIG domain. Residues Asp196–Met231 form the UVR domain.

The protein belongs to the UvrC family. In terms of assembly, interacts with UvrB in an incision complex.

The protein resides in the cytoplasm. In terms of biological role, the UvrABC repair system catalyzes the recognition and processing of DNA lesions. UvrC both incises the 5' and 3' sides of the lesion. The N-terminal half is responsible for the 3' incision and the C-terminal half is responsible for the 5' incision. The chain is UvrABC system protein C from Streptococcus pyogenes serotype M18 (strain MGAS8232).